A 381-amino-acid chain; its full sequence is Alkanesulfonate monooxygenase (381 aa).

Belongs to the SsuD family. Homotetramer.

The catalysed reaction is an alkanesulfonate + FMNH2 + O2 = an aldehyde + FMN + sulfite + H2O + 2 H(+). Functionally, catalyzes the desulfonation of aliphatic sulfonates. This Escherichia coli O8 (strain IAI1) protein is Alkanesulfonate monooxygenase.